Consider the following 102-residue polypeptide: Nucleoid-associated protein BCc_301 (102 aa).

It belongs to the YbaB/EbfC family. As to quaternary structure, homodimer.

The protein localises to the cytoplasm. The protein resides in the nucleoid. In terms of biological role, binds to DNA and alters its conformation. May be involved in regulation of gene expression, nucleoid organization and DNA protection. The protein is Nucleoid-associated protein BCc_301 of Buchnera aphidicola subsp. Cinara cedri (strain Cc).